The chain runs to 449 residues: Glucose-6-phosphate isomerase (449 aa).

Residue Glu291 is the Proton donor of the active site. Active-site residues include His312 and Lys426.

It belongs to the GPI family.

Its subcellular location is the cytoplasm. The catalysed reaction is alpha-D-glucose 6-phosphate = beta-D-fructose 6-phosphate. Its pathway is carbohydrate biosynthesis; gluconeogenesis. The protein operates within carbohydrate degradation; glycolysis; D-glyceraldehyde 3-phosphate and glycerone phosphate from D-glucose: step 2/4. Functionally, catalyzes the reversible isomerization of glucose-6-phosphate to fructose-6-phosphate. The sequence is that of Glucose-6-phosphate isomerase from Streptococcus pyogenes serotype M28 (strain MGAS6180).